The primary structure comprises 237 residues: N-alpha-acetyltransferase 40 (237 aa).

Residue Gly-2 is the site of N-myristoyl glycine attachment. In terms of domain architecture, N-acetyltransferase spans 63–216 (SGLEPATVDW…EDCSYEILSR (154 aa)). Substrate is bound by residues Tyr-85, 127–129 (DVE), and Tyr-138. Acetyl-CoA is bound by residues 140-142 (VQL) and 148-153 (RKGLGK). Substrate is bound at residue Thr-174. Residue Asn-179 coordinates acetyl-CoA. 2 residues coordinate substrate: Ser-197 and Tyr-211.

Belongs to the acetyltransferase family. NAA40 subfamily.

It localises to the cytoplasm. The protein localises to the nucleus. It catalyses the reaction N-terminal L-seryl-[histone H4] + acetyl-CoA = N-terminal N(alpha)-acetyl-L-seryl-[histone H4] + CoA + H(+). The enzyme catalyses N-terminal L-seryl-[histone H2A] + acetyl-CoA = N-terminal N(alpha)-acetyl-L-seryl-[histone H2A] + CoA + H(+). Functionally, N-alpha-acetyltransferase that specifically mediates the acetylation of the N-terminal residues of histones H4 and H2A. In contrast to other N-alpha-acetyltransferase, has a very specific selectivity for histones H4 and H2A N-terminus and specifically recognizes the 'Ser-Gly-Arg-Gly sequence'. Acts as a negative regulator of apoptosis. May play a role in hepatic lipid metabolism. The protein is N-alpha-acetyltransferase 40 of Mus musculus (Mouse).